The sequence spans 198 residues: ATP-dependent Clp protease proteolytic subunit 2 (198 aa).

Ser101 functions as the Nucleophile in the catalytic mechanism. His126 is an active-site residue.

It belongs to the peptidase S14 family. In terms of assembly, fourteen ClpP subunits assemble into 2 heptameric rings which stack back to back to give a disk-like structure with a central cavity, resembling the structure of eukaryotic proteasomes.

It localises to the cytoplasm. It carries out the reaction Hydrolysis of proteins to small peptides in the presence of ATP and magnesium. alpha-casein is the usual test substrate. In the absence of ATP, only oligopeptides shorter than five residues are hydrolyzed (such as succinyl-Leu-Tyr-|-NHMec, and Leu-Tyr-Leu-|-Tyr-Trp, in which cleavage of the -Tyr-|-Leu- and -Tyr-|-Trp bonds also occurs).. Functionally, cleaves peptides in various proteins in a process that requires ATP hydrolysis. Has a chymotrypsin-like activity. Plays a major role in the degradation of misfolded proteins. This is ATP-dependent Clp protease proteolytic subunit 2 from Thermosynechococcus vestitus (strain NIES-2133 / IAM M-273 / BP-1).